A 292-amino-acid chain; its full sequence is Elongation factor Ts (292 aa).

Positions 81-84 (TDFV) are involved in Mg(2+) ion dislocation from EF-Tu.

Belongs to the EF-Ts family.

It is found in the cytoplasm. Its function is as follows. Associates with the EF-Tu.GDP complex and induces the exchange of GDP to GTP. It remains bound to the aminoacyl-tRNA.EF-Tu.GTP complex up to the GTP hydrolysis stage on the ribosome. This is Elongation factor Ts from Psychromonas ingrahamii (strain DSM 17664 / CCUG 51855 / 37).